The primary structure comprises 266 residues: 15-hydroxyprostaglandin dehydrogenase [NAD(+)] (266 aa).

NAD(+) contacts are provided by residues 12 to 20 (GAAQGIGRA), 36 to 37 (DW), 63 to 65 (CDV), and asparagine 91. Positions 138 and 148 each coordinate substrate. Catalysis depends on tyrosine 151, which acts as the Proton acceptor. Residues 151-155 (YCASK) and 186-188 (VNT) contribute to the NAD(+) site.

Belongs to the short-chain dehydrogenases/reductases (SDR) family. Homodimer. Detected in colon epithelium (at protein level).

The protein resides in the cytoplasm. The enzyme catalyses prostaglandin E2 + NAD(+) = 15-oxoprostaglandin E2 + NADH + H(+). It catalyses the reaction (15S)-hydroxy-(5Z,8Z,11Z,13E)-eicosatetraenoate + NAD(+) = 15-oxo-(5Z,8Z,11Z,13E)-eicosatetraenoate + NADH + H(+). The catalysed reaction is (11R)-hydroxy-(5Z,8Z,12E,14Z)-eicosatetraenoate + NAD(+) = 11-oxo-(5Z,8Z,12E,14Z)-eicosatetraenoate + NADH + H(+). It carries out the reaction lipoxin A4 + NAD(+) = 15-oxo-(5S,6R)-dihydroxy-(7E,9E,11Z,13E)-eicosatetraenoate + NADH + H(+). The enzyme catalyses 15-oxo-(5S,6R)-dihydroxy-(7E,9E,11Z)-eicosatrienoate + NADH + H(+) = (5S,6R,15S)-trihydroxy-(7E,9E,11Z)-eicosatrienoate + NAD(+). It catalyses the reaction prostaglandin A1 + NAD(+) = 15-oxo-prostaglandin A1 + NADH + H(+). The catalysed reaction is prostaglandin E1 + NAD(+) = 15-oxoprostaglandin E1 + NADH + H(+). It carries out the reaction 14-hydroxy-(4Z,7Z,10Z,12E,16Z,19Z)-docosahexaenoate + NAD(+) = 14-oxo-(4Z,7Z,10Z,12E,16Z,19Z)-docosahexaenoate + NADH + H(+). The enzyme catalyses resolvin E1 + NAD(+) = 18-oxo-resolvin E1 + NADH + H(+). It catalyses the reaction resolvin D1 + NAD(+) = 8-oxoresolvin D1 + NADH + H(+). The catalysed reaction is resolvin D1 + NAD(+) = 17-oxoresolvin D1 + NADH + H(+). It carries out the reaction resolvin D2 + NAD(+) = 7-oxoresolvin D2 + NADH + H(+). The enzyme catalyses resolvin D2 + NAD(+) = 16-oxoresolvin D2 + NADH + H(+). In terms of biological role, catalyzes the NAD-dependent dehydrogenation (oxidation) of a broad array of hydroxylated polyunsaturated fatty acids (mainly eicosanoids and docosanoids, including prostaglandins, lipoxins and resolvins), yielding their corresponding keto (oxo) metabolites. Decreases the levels of the pro-proliferative prostaglandins such as prostaglandin E2 (whose activity is increased in cancer because of an increase in the expression of cyclooxygenase 2) and generates oxo-fatty acid products that can profoundly influence cell function by abrogating pro-inflammatory cytokine expression. Converts resolvins E1, D1 and D2 to their oxo products, which represents a mode of resolvin inactivation. Resolvin E1 plays important roles during the resolution phase of acute inflammation, while resolvins D1 and D2 have a unique role in obesity-induced adipose inflammation. This chain is 15-hydroxyprostaglandin dehydrogenase [NAD(+)], found in Homo sapiens (Human).